An 85-amino-acid chain; its full sequence is Neurotoxin BmKAEP2 (85 aa).

Residues 1–21 form the signal peptide; that stretch reads MKLFLLLVISASMLIDGLVNA. Residues 22–82 form the LCN-type CS-alpha/beta domain; the sequence is DGYIRGSNGC…TWKSESNTCG (61 aa). Disulfide bonds link Cys31–Cys81, Cys35–Cys56, Cys42–Cys63, and Cys46–Cys65.

Belongs to the long (4 C-C) scorpion toxin superfamily. Sodium channel inhibitor family. Beta subfamily. Expressed by the venom gland.

The protein resides in the secreted. Its function is as follows. Depressant insect beta-toxins cause a transient contraction paralysis followed by a slow flaccid paralysis. They bind voltage-independently at site-4 of sodium channels (Nav) and shift the voltage of activation toward more negative potentials thereby affecting sodium channel activation and promoting spontaneous and repetitive firing. This toxin is active only on insects. Has potential anti-epilepsy effect. The polypeptide is Neurotoxin BmKAEP2 (Olivierus martensii (Manchurian scorpion)).